A 471-amino-acid polypeptide reads, in one-letter code: MAVGHVIQVMGPVIDVRFEHGQLPALNNALTLDIERGEGNTTKLTLEVALHLGDDAVRTIAMSSTDGVQRGAQVTDTGAPISVPVGDATLGRVFNVLGEKIDLEPELDGTVRRDPIHRQAPKFEELSTKVEILETGIKVVDLLAPYIKGGKIGLFGGAGVGKTVLIQELINNIAQEHGGISVFAGVGERTREGNDLFHEMSDSGVIKKTAMVFGQMNEPPGARMRVALSGLTMAEYFRDEQGQDVLLFIDNIFRFTQAGSEVSALLGRMPSAVGYQPTLATEMGQLQERITSTNVGSVTSIQAVFVPADDYTDPAPATAFAHLDATTNLERKLTEMGIYPAVDPLASTSRALTPAVVGEEHYEVARQVQATLQKYRELQDIIAILGMDELSDEDKKTVSRARRIQFFLSQNFHVAEQFTGQKGSYVPVKQTVQDFKAILEGKYDHIPEDAFRLVGGIEAVLEQAKGMGVEV.

156 to 163 contacts ATP; sequence GGAGVGKT.

This sequence belongs to the ATPase alpha/beta chains family. As to quaternary structure, F-type ATPases have 2 components, CF(1) - the catalytic core - and CF(0) - the membrane proton channel. CF(1) has five subunits: alpha(3), beta(3), gamma(1), delta(1), epsilon(1). CF(0) has three main subunits: a(1), b(2) and c(9-12). The alpha and beta chains form an alternating ring which encloses part of the gamma chain. CF(1) is attached to CF(0) by a central stalk formed by the gamma and epsilon chains, while a peripheral stalk is formed by the delta and b chains.

Its subcellular location is the cell membrane. It catalyses the reaction ATP + H2O + 4 H(+)(in) = ADP + phosphate + 5 H(+)(out). In terms of biological role, produces ATP from ADP in the presence of a proton gradient across the membrane. The catalytic sites are hosted primarily by the beta subunits. This is ATP synthase subunit beta from Macrococcus caseolyticus (strain JCSC5402) (Macrococcoides caseolyticum).